Here is a 265-residue protein sequence, read N- to C-terminus: Type II pantothenate kinase (265 aa).

ATP is bound at residue 6 to 13 (DAGGTLIK). Glutamate 70 (proton acceptor) is an active-site residue. Residues threonine 99, 121–125 (GGMIQ), tyrosine 137, and serine 225 contribute to the ATP site.

This sequence belongs to the type II pantothenate kinase family. Homodimer.

It localises to the cytoplasm. The enzyme catalyses (R)-pantothenate + ATP = (R)-4'-phosphopantothenate + ADP + H(+). It functions in the pathway cofactor biosynthesis; coenzyme A biosynthesis; CoA from (R)-pantothenate: step 1/5. Catalyzes the phosphorylation of pantothenate (Pan), the first step in CoA biosynthesis. The sequence is that of Type II pantothenate kinase from Staphylococcus saprophyticus subsp. saprophyticus (strain ATCC 15305 / DSM 20229 / NCIMB 8711 / NCTC 7292 / S-41).